Reading from the N-terminus, the 130-residue chain is Small ribosomal subunit protein uS9 (130 aa).

It belongs to the universal ribosomal protein uS9 family.

The polypeptide is Small ribosomal subunit protein uS9 (Geotalea daltonii (strain DSM 22248 / JCM 15807 / FRC-32) (Geobacter daltonii)).